A 315-amino-acid polypeptide reads, in one-letter code: Homoserine O-succinyltransferase (315 aa).

C142 (acyl-thioester intermediate) is an active-site residue. K163 and S192 together coordinate substrate. H235 acts as the Proton acceptor in catalysis. The active site involves E237. Residue R249 coordinates substrate.

This sequence belongs to the MetA family.

The protein resides in the cytoplasm. It catalyses the reaction L-homoserine + succinyl-CoA = O-succinyl-L-homoserine + CoA. The protein operates within amino-acid biosynthesis; L-methionine biosynthesis via de novo pathway; O-succinyl-L-homoserine from L-homoserine: step 1/1. Functionally, transfers a succinyl group from succinyl-CoA to L-homoserine, forming succinyl-L-homoserine. The polypeptide is Homoserine O-succinyltransferase (Tolumonas auensis (strain DSM 9187 / NBRC 110442 / TA 4)).